The sequence spans 361 residues: D-alanine--D-alanine ligase (361 aa).

The 205-residue stretch at K149–Q353 folds into the ATP-grasp domain. K176–E231 contributes to the ATP binding site. Residues D308, E320, and N322 each contribute to the Mg(2+) site.

It belongs to the D-alanine--D-alanine ligase family. It depends on Mg(2+) as a cofactor. Mn(2+) is required as a cofactor.

It is found in the cytoplasm. The catalysed reaction is 2 D-alanine + ATP = D-alanyl-D-alanine + ADP + phosphate + H(+). The protein operates within cell wall biogenesis; peptidoglycan biosynthesis. In terms of biological role, cell wall formation. The protein is D-alanine--D-alanine ligase of Corynebacterium efficiens (strain DSM 44549 / YS-314 / AJ 12310 / JCM 11189 / NBRC 100395).